Here is a 467-residue protein sequence, read N- to C-terminus: Glutamate--tRNA ligase (467 aa).

The 'HIGH' region signature appears at 9–19 (PSPTGYLHIGG). The 'KMSKS' region motif lies at 237 to 241 (KLSKR). Lysine 240 contributes to the ATP binding site.

This sequence belongs to the class-I aminoacyl-tRNA synthetase family. Glutamate--tRNA ligase type 1 subfamily. In terms of assembly, monomer.

The protein resides in the cytoplasm. The catalysed reaction is tRNA(Glu) + L-glutamate + ATP = L-glutamyl-tRNA(Glu) + AMP + diphosphate. Catalyzes the attachment of glutamate to tRNA(Glu) in a two-step reaction: glutamate is first activated by ATP to form Glu-AMP and then transferred to the acceptor end of tRNA(Glu). In Xanthomonas euvesicatoria pv. vesicatoria (strain 85-10) (Xanthomonas campestris pv. vesicatoria), this protein is Glutamate--tRNA ligase.